Consider the following 422-residue polypeptide: MDKIVIEGGVPLRGSVDVSGAKNAALPVIAAALLAEGEHEVRNVPDLADVRTLGKLLGHMGCEVVRGEGDRRTVRLRVPAAVTPEAPYELVKTMRASVLVLGPLLARLGRARVSLPGGCAIGARPIDQHLKALTALGAEIRLEHGYVNASVPGGRLRGTVFTFDAQTVTGTENVMMAAALAEGETVLRNCAREPEVKDLGDALVAMGALVEGAGTDEIWIEGVPSLRPLSHAVIPDRIEAGTFLVAGALPGNDVTVRGCVAAHQEALVEKLRAVGAEVTKVEGGLRVIGDGRPRPVDVRTAPHPGFPTDMQAQLMVLLCLADGTSRITETVFENRFMHVQELIRLGAHVEVDGRVAMVKGVPELSGAPVMASDLRASAALVLAGLAATGTTEVLRVYHLDRGYERIEEKLAPLGARIRRVRG.

22-23 (KN) lines the phosphoenolpyruvate pocket. UDP-N-acetyl-alpha-D-glucosamine is bound at residue R95. C119 (proton donor) is an active-site residue. At C119 the chain carries 2-(S-cysteinyl)pyruvic acid O-phosphothioketal. UDP-N-acetyl-alpha-D-glucosamine-binding positions include 124–128 (RPIDQ), D309, and V331.

It belongs to the EPSP synthase family. MurA subfamily.

The protein localises to the cytoplasm. It carries out the reaction phosphoenolpyruvate + UDP-N-acetyl-alpha-D-glucosamine = UDP-N-acetyl-3-O-(1-carboxyvinyl)-alpha-D-glucosamine + phosphate. Its pathway is cell wall biogenesis; peptidoglycan biosynthesis. Its function is as follows. Cell wall formation. Adds enolpyruvyl to UDP-N-acetylglucosamine. This chain is UDP-N-acetylglucosamine 1-carboxyvinyltransferase, found in Anaeromyxobacter dehalogenans (strain 2CP-C).